A 215-amino-acid chain; its full sequence is Pyridoxine/pyridoxamine 5'-phosphate oxidase (215 aa).

Substrate contacts are provided by residues 9 to 12 (RRDY) and Lys69. FMN is bound by residues 64–69 (RVLLLK), 79–80 (FT), Lys86, and Gln108. 3 residues coordinate substrate: Tyr126, Arg130, and Ser134. Residues 143-144 (QS) and Trp188 each bind FMN. 194-196 (RLH) contacts substrate. FMN is bound at residue Arg198.

This sequence belongs to the pyridoxamine 5'-phosphate oxidase family. Homodimer. FMN serves as cofactor.

The enzyme catalyses pyridoxamine 5'-phosphate + O2 + H2O = pyridoxal 5'-phosphate + H2O2 + NH4(+). It carries out the reaction pyridoxine 5'-phosphate + O2 = pyridoxal 5'-phosphate + H2O2. The protein operates within cofactor metabolism; pyridoxal 5'-phosphate salvage; pyridoxal 5'-phosphate from pyridoxamine 5'-phosphate: step 1/1. Its pathway is cofactor metabolism; pyridoxal 5'-phosphate salvage; pyridoxal 5'-phosphate from pyridoxine 5'-phosphate: step 1/1. Catalyzes the oxidation of either pyridoxine 5'-phosphate (PNP) or pyridoxamine 5'-phosphate (PMP) into pyridoxal 5'-phosphate (PLP). In Pseudomonas putida (strain GB-1), this protein is Pyridoxine/pyridoxamine 5'-phosphate oxidase.